A 279-amino-acid chain; its full sequence is DegV domain-containing protein CPE1310 (279 aa).

The DegV domain maps to 4–277; it reads IKIITDSTCD…PKVCALFYVE (274 aa). 2 residues coordinate hexadecanoate: Thr-62 and Ser-94.

Its function is as follows. May bind long-chain fatty acids, such as palmitate, and may play a role in lipid transport or fatty acid metabolism. This is DegV domain-containing protein CPE1310 from Clostridium perfringens (strain 13 / Type A).